The sequence spans 633 residues: Glutamyl-tRNA(Gln) amidotransferase subunit E (633 aa).

The protein belongs to the GatB/GatE family. GatE subfamily. Heterodimer of GatD and GatE.

The catalysed reaction is L-glutamyl-tRNA(Gln) + L-glutamine + ATP + H2O = L-glutaminyl-tRNA(Gln) + L-glutamate + ADP + phosphate + H(+). Functionally, allows the formation of correctly charged Gln-tRNA(Gln) through the transamidation of misacylated Glu-tRNA(Gln) in organisms which lack glutaminyl-tRNA synthetase. The reaction takes place in the presence of glutamine and ATP through an activated gamma-phospho-Glu-tRNA(Gln). The GatDE system is specific for glutamate and does not act on aspartate. This Methanosarcina acetivorans (strain ATCC 35395 / DSM 2834 / JCM 12185 / C2A) protein is Glutamyl-tRNA(Gln) amidotransferase subunit E.